The sequence spans 245 residues: Carbohydrate deacetylase (245 aa).

Residues histidine 59 and histidine 121 each contribute to the Mg(2+) site.

This sequence belongs to the YdjC deacetylase family. Homodimer. The cofactor is Mg(2+).

Functionally, probably catalyzes the deacetylation of acetylated carbohydrates an important step in the degradation of oligosaccharides. This Clostridium beijerinckii (strain ATCC 51743 / NCIMB 8052) (Clostridium acetobutylicum) protein is Carbohydrate deacetylase.